The sequence spans 1314 residues: Phosphoribosylformylglycinamidine synthase (1314 aa).

ATP is bound by residues 307-318 (GAATGAGGEIRD) and A674. The Mg(2+) site is built by D675, E714, N718, and D880. ATP is bound at residue S882. Positions 1063–1314 (IAILREQGVN…LFAGARKALG (252 aa)) constitute a Glutamine amidotransferase type-1 domain. Catalysis depends on C1156, which acts as the Nucleophile. Residues H1279 and E1281 contribute to the active site.

In the N-terminal section; belongs to the FGAMS family. As to quaternary structure, monomer.

Its subcellular location is the cytoplasm. It carries out the reaction N(2)-formyl-N(1)-(5-phospho-beta-D-ribosyl)glycinamide + L-glutamine + ATP + H2O = 2-formamido-N(1)-(5-O-phospho-beta-D-ribosyl)acetamidine + L-glutamate + ADP + phosphate + H(+). Its pathway is purine metabolism; IMP biosynthesis via de novo pathway; 5-amino-1-(5-phospho-D-ribosyl)imidazole from N(2)-formyl-N(1)-(5-phospho-D-ribosyl)glycinamide: step 1/2. Its function is as follows. Phosphoribosylformylglycinamidine synthase involved in the purines biosynthetic pathway. Catalyzes the ATP-dependent conversion of formylglycinamide ribonucleotide (FGAR) and glutamine to yield formylglycinamidine ribonucleotide (FGAM) and glutamate. This is Phosphoribosylformylglycinamidine synthase from Neisseria gonorrhoeae (strain ATCC 700825 / FA 1090).